Here is a 676-residue protein sequence, read N- to C-terminus: MYHTVPYTIESPGYLKVAGESLPRRHPRAKHGLLRYPSAGVLTVFDIVRRSAKLYPDNKAVGSRRLIKMHREFKIIQDKEKEWIYYELGPYNYLSYSQYELLAIQIGSGLRKLGLSSSNKVYLFGTTSANWISMSHGCASQGIPIVTGYDTLSATDIQHSLSQTHAEVIYLDPHLLGTASIALENSQVKTVIINTGSIFSGGYDIDQFRNEHPQFNVITYEELIQLGRHNLKEPIPVKSSDLFCIMYTSGSTGLPNGCCITHENFLAGITGLLGGIDDFVSDQERVLAYLPLAHIFEMALENLVMYIGGTLGYGNPKTLTDASLRECNGDMVEFKPTIMVGVPQIWETIRKAVLSKLNCSGFVAKTVFWTAMSFKSFAVRYSLPGKGVFDDLVFGRVRQMTGGRLRYILNGSSGIADSTKEFLSLIVAEMLTGYGLTETCANGALSSPFEQTTSAIGSTSPAIDVKLVSIPELGYFTDADAGPCQGEILVRGPAVFKGYFNNPQGTEKAFAPGGWFKTGDIGEFDDRGHLKIIDRIKSLVKMQGGEYIALEKLESIYRTSQAILQVMVHADFEYTRPIVIIMPNTKFLQDKSRELGFSDDDSTLSSERMSAYVLDDLQDIARRSGLSKIETVTGVVITDIEWTPQSGLVTPTMKLNRRFILNYFRDEVEKCMQSIG.

245 to 256 is an AMP binding site; the sequence is IMYTSGSTGLPN. Positions 552 to 655 are AMP-binding; it reads KLESIYRTSQ…SGLVTPTMKL (104 aa).

This sequence belongs to the ATP-dependent AMP-binding enzyme family.

It is found in the endoplasmic reticulum. It participates in mycotoxin biosynthesis. Its function is as follows. Palmitoyl-CoA ligase; part of the gene cluster that mediates the biosynthesis of fumonisins B1 (FB1), B2 (FB2), B3 (FB3), and B4 (FB4), which are carcinogenic mycotoxins. Plays a role in the synthesis of ceramide and is involved in self-protection from fumonisin B1 toxicity. The biosynthesis starts with the FUM1-catalyzed carbon chain assembly from one molecule of acetyl-CoA, eight molecules of malonyl-CoA, and two molecules of methionine (in S-adenosyl form). The C18 polyketide chain is released from the enzyme by a nucleophilic attack of a carbanion, which is derived from R-carbon of alanine by decarboxylation, on the carbonyl carbon of polyketide acyl chain. This step is catalyzed by the pyridoxal 5'-phosphate-dependent aminoacyl transferase FUM8. The resultant 3-keto intermediate is then stereospecifically reduced to a 3-hydroxyl product by reductase FUM13. Subsequent oxidations at C-10 by the cytochrome P450 monooxygenase FUM2, C-14 and C-15 by FUM6, FUM12 or FUM15, tricarballylic esterification of the hydroxyl groups on C-14 and C-15 by acyltransferase FUM14, and C-5 hydroxylation by 2-keto-glutarate-dependent dioxygenase FUM3 furnish the biosynthesis of fumonisins. The tricarballylic moieties are most likely derived from the citric acid cycle, and their addition to the carbon backbone may involve FUM7, FUM10, FUM11 and FUM14. The polypeptide is Palmitoyl-CoA ligase FUM16 (Gibberella moniliformis (strain M3125 / FGSC 7600) (Maize ear and stalk rot fungus)).